A 351-amino-acid chain; its full sequence is Uroporphyrinogen decarboxylase (351 aa).

Substrate is bound by residues 25–29 (RQAGR), Asp74, Tyr151, Ser206, and His325.

This sequence belongs to the uroporphyrinogen decarboxylase family. Homodimer.

The protein localises to the cytoplasm. The enzyme catalyses uroporphyrinogen III + 4 H(+) = coproporphyrinogen III + 4 CO2. It participates in porphyrin-containing compound metabolism; protoporphyrin-IX biosynthesis; coproporphyrinogen-III from 5-aminolevulinate: step 4/4. In terms of biological role, catalyzes the decarboxylation of four acetate groups of uroporphyrinogen-III to yield coproporphyrinogen-III. In Pelodictyon phaeoclathratiforme (strain DSM 5477 / BU-1), this protein is Uroporphyrinogen decarboxylase.